A 398-amino-acid polypeptide reads, in one-letter code: Metalloprotease MmpA (398 aa).

Residue His22 participates in Zn(2+) binding. Residue Glu23 is part of the active site. Residue His26 coordinates Zn(2+). Helical transmembrane passes span 117 to 139 (FIAV…VILV), 316 to 338 (QFWL…IPVL), and 362 to 381 (AAGF…FAAW). The PDZ domain occupies 130 to 203 (AILVFAVILV…MPIDFAVERD (74 aa)).

Belongs to the peptidase M50B family. Zn(2+) serves as cofactor.

The protein localises to the cell inner membrane. Involved in the regulated intramembrane proteolysis (RIP) of the short isoform of PodJ protein (PodJS), during the swarmer-to-stalked transition. The cleavage occurs near or within the single transmembrane of PodJS thereby releasing the N-terminal segment into the cytoplasm for subsequent degradation. It contributes to preserve asymmetry in the next cell cycle through sequential degradation. This Caulobacter vibrioides (strain ATCC 19089 / CIP 103742 / CB 15) (Caulobacter crescentus) protein is Metalloprotease MmpA (mmpA).